We begin with the raw amino-acid sequence, 450 residues long: V-type proton ATPase subunit H (450 aa).

The protein belongs to the V-ATPase H subunit family. In terms of assembly, V-ATPase is a heteromultimeric enzyme composed of a peripheral catalytic V1 complex (components A to H) attached to an integral membrane V0 proton pore complex (components: a, c, c', c'', d, e, f and VOA1).

It is found in the vacuole membrane. Its function is as follows. Subunit of the V1 complex of vacuolar(H+)-ATPase (V-ATPase), a multisubunit enzyme composed of a peripheral complex (V1) that hydrolyzes ATP and a membrane integral complex (V0) that translocates protons. V-ATPase is responsible for acidifying and maintaining the pH of intracellular compartments. This subunit is essential for activity, but not assembly, of the enzyme complex. This subunit is also required for silencing the ATPase activity of V-ATPase when V1 is detached from V0. This Schizosaccharomyces pombe (strain 972 / ATCC 24843) (Fission yeast) protein is V-type proton ATPase subunit H (vma13).